The primary structure comprises 262 residues: Urease accessory protein UreD (262 aa).

It belongs to the UreD family. UreD, UreF and UreG form a complex that acts as a GTP-hydrolysis-dependent molecular chaperone, activating the urease apoprotein by helping to assemble the nickel containing metallocenter of UreC. The UreE protein probably delivers the nickel.

It is found in the cytoplasm. Required for maturation of urease via the functional incorporation of the urease nickel metallocenter. This is Urease accessory protein UreD from Acetivibrio thermocellus (strain ATCC 27405 / DSM 1237 / JCM 9322 / NBRC 103400 / NCIMB 10682 / NRRL B-4536 / VPI 7372) (Clostridium thermocellum).